A 37-amino-acid polypeptide reads, in one-letter code: Large ribosomal subunit protein bL36 (37 aa).

This sequence belongs to the bacterial ribosomal protein bL36 family.

The sequence is that of Large ribosomal subunit protein bL36 (rpmJ) from Geobacillus stearothermophilus (Bacillus stearothermophilus).